We begin with the raw amino-acid sequence, 89 residues long: Huwentoxin-IV (89 aa).

Positions 1–24 (MVNMKASMFLALAGLVLLFVVCYA) are cleaved as a signal peptide. Positions 25 to 52 (SESEEKEFSNELLSSVLAVDDNSKGEER) are excised as a propeptide. Residue glutamate 53 is modified to Pyrrolidone carboxylic acid (Glu); partial. Intrachain disulfides connect cysteine 54/cysteine 69, cysteine 61/cysteine 76, and cysteine 68/cysteine 83. Isoleucine 87 carries the isoleucine amide modification.

It belongs to the neurotoxin 10 (Hwtx-1) family. 22 (Htx-4) subfamily. In terms of processing, two forms of huwentoxin-IV exist in the venom of H.schmidti, a non-N-terminally modified (HwTx-IV) and a naturally modified peptide with pyroglutamic acid residue at position 53 (mHwTx-IV). mHwTx-IV shows no observable difference with the unmodified toxin when applied to the TTX-S sodium channel of DRG neuron (IC(50)~50 nM) or when tested on hNav1.7/SCN9A (IC(50)=30.8 nM). In addition, similarly to the unmodified toxin, mHwTx-IV has only a weak affinity for lipid membranes. However, in contrast with HwTx-IV, which dissociates at moderate and high depolarization voltages (50-200 mV), mHwTx-IV inhibition of TTX-sensitive sodium channels is not reversed by strong depolarization voltages. In terms of tissue distribution, expressed by the venom gland.

The protein resides in the secreted. Functionally, this lethal neurotoxin (without cyclization at position 53) inhibits neuronal voltage-gated sodium channel Nav1.2/SCN2A (IC(50)=10-150 nM), rNav1.3/SCN3A (IC(50)=338 nM), Nav1.6/SCN8A (IC(50)=117 nM), and hNav1.7/SCN9A (IC(50)=9.6-33 nM). It inhibits activation of sodium channel by trapping the voltage sensor of domain II (DIIS4) in the closed configuration. The toxin neither shifts the Nav1.7/SCN9A activation curve nor modifies the slope factor. It does not slow fast-inactivation of hNav1.7/SCN9A channels. In addition, it has only a weak affinity for lipid membranes. This toxin also exists with a pyroglutamate at position 53. The sole difference observed between modified (mHwTx-IV) and unmodified toxins is that moderate or high depolarization voltages (200 mV) permit the unmodified toxin to dissociate, whereas mHwTx-IV toxin does not dissociate, even at high depolarization voltages. These data indicate that mHwTx-IV strongly binds to voltage sensor of sodium channel even at extreme depolarization voltages. This chain is Huwentoxin-IV, found in Cyriopagopus schmidti (Chinese bird spider).